The primary structure comprises 450 residues: Akuammiline synthase 2 (450 aa).

The Proton acceptor role is filled by His-154. The Nuclear localization signal signature appears at Met-218–Ala-225. Asp-376 functions as the Proton acceptor in the catalytic mechanism.

This sequence belongs to the plant acyltransferase family. Monomer.

It localises to the cytoplasm. It is found in the nucleus. The enzyme catalyses rhazimol + acetyl-CoA = akuammiline + CoA + H(+). Its pathway is alkaloid biosynthesis. Functionally, acyltransferase involved in the biosynthesis of akuammilan monoterpene indole alkaloids (MIAs) natural products, components with various biological properties such as antidiabetic, antibacterial, anti-inflammatory, anticancer, and antimalarial activities. Catalyzes the conversion of rhazimol to akuammiline. In Alstonia scholaris (Dogbane), this protein is Akuammiline synthase 2.